Reading from the N-terminus, the 60-residue chain is Putative insect toxin Acra6 (60 aa).

In terms of domain architecture, LCN-type CS-alpha/beta spans 2 to 60 (RDGYIRRKDEFKFKCYVDGKDCDDVCKSEGGSAGYCTALGFLCYCAGLPDDKAWKPTSS). Intrachain disulfides connect Cys16/Cys37, Cys23/Cys44, and Cys27/Cys46.

Belongs to the long (4 C-C) scorpion toxin superfamily. Sodium channel inhibitor family. Beta subfamily. As to expression, expressed by the venom gland.

Its subcellular location is the secreted. Its function is as follows. Depressant insect toxins cause a transient contraction paralysis followed by a slow flaccid paralysis. They bind voltage-independently to sodium channels (Nav) and block action potentials, primarily by depolarizing the axonal membrane and suppressing the sodium current. The polypeptide is Putative insect toxin Acra6 (Androctonus crassicauda (Arabian fat-tailed scorpion)).